The following is a 392-amino-acid chain: ATP phosphoribosyltransferase regulatory subunit (392 aa).

This sequence belongs to the class-II aminoacyl-tRNA synthetase family. HisZ subfamily. Heteromultimer composed of HisG and HisZ subunits.

Its subcellular location is the cytoplasm. It participates in amino-acid biosynthesis; L-histidine biosynthesis; L-histidine from 5-phospho-alpha-D-ribose 1-diphosphate: step 1/9. Required for the first step of histidine biosynthesis. May allow the feedback regulation of ATP phosphoribosyltransferase activity by histidine. The polypeptide is ATP phosphoribosyltransferase regulatory subunit (Geobacillus sp. (strain WCH70)).